The sequence spans 154 residues: Crossover junction endodeoxyribonuclease RuvC (154 aa).

Catalysis depends on residues Asp7, Glu67, and Asp139. The Mg(2+) site is built by Asp7, Glu67, and Asp139.

The protein belongs to the RuvC family. Homodimer which binds Holliday junction (HJ) DNA. The HJ becomes 2-fold symmetrical on binding to RuvC with unstacked arms; it has a different conformation from HJ DNA in complex with RuvA. In the full resolvosome a probable DNA-RuvA(4)-RuvB(12)-RuvC(2) complex forms which resolves the HJ. Mg(2+) is required as a cofactor.

Its subcellular location is the cytoplasm. The catalysed reaction is Endonucleolytic cleavage at a junction such as a reciprocal single-stranded crossover between two homologous DNA duplexes (Holliday junction).. Functionally, the RuvA-RuvB-RuvC complex processes Holliday junction (HJ) DNA during genetic recombination and DNA repair. Endonuclease that resolves HJ intermediates. Cleaves cruciform DNA by making single-stranded nicks across the HJ at symmetrical positions within the homologous arms, yielding a 5'-phosphate and a 3'-hydroxyl group; requires a central core of homology in the junction. The consensus cleavage sequence is 5'-(A/T)TT(C/G)-3'. Cleavage occurs on the 3'-side of the TT dinucleotide at the point of strand exchange. HJ branch migration catalyzed by RuvA-RuvB allows RuvC to scan DNA until it finds its consensus sequence, where it cleaves and resolves the cruciform DNA. This chain is Crossover junction endodeoxyribonuclease RuvC, found in Synechococcus sp. (strain CC9605).